The following is a 191-amino-acid chain: UPF0149 protein VV1_1551 (191 aa).

This sequence belongs to the UPF0149 family.

In Vibrio vulnificus (strain CMCP6), this protein is UPF0149 protein VV1_1551.